The following is a 238-amino-acid chain: Transcription factor MYB27 (238 aa).

HTH myb-type domains lie at 6 to 58 (EETL…MNYL) and 59 to 113 (NPTL…RKKQ). Positions 31-38 (ERRWDSLA) match the Nuclear localization signal motif. 2 DNA-binding regions (H-T-H motif) span residues 34–58 (WDSLAIVSGLKRSGKSCRLRWMNYL) and 86–109 (WSKIARRLPGRTDNEIKNYWRTHY).

It is found in the nucleus. This Arabidopsis thaliana (Mouse-ear cress) protein is Transcription factor MYB27.